The primary structure comprises 390 residues: NADH-quinone oxidoreductase subunit D (390 aa).

The protein belongs to the complex I 49 kDa subunit family. NDH-1 is composed of 14 different subunits. Subunits NuoB, C, D, E, F, and G constitute the peripheral sector of the complex.

The protein resides in the cell inner membrane. The catalysed reaction is a quinone + NADH + 5 H(+)(in) = a quinol + NAD(+) + 4 H(+)(out). Functionally, NDH-1 shuttles electrons from NADH, via FMN and iron-sulfur (Fe-S) centers, to quinones in the respiratory chain. The immediate electron acceptor for the enzyme in this species is believed to be ubiquinone. Couples the redox reaction to proton translocation (for every two electrons transferred, four hydrogen ions are translocated across the cytoplasmic membrane), and thus conserves the redox energy in a proton gradient. The polypeptide is NADH-quinone oxidoreductase subunit D (Geotalea uraniireducens (strain Rf4) (Geobacter uraniireducens)).